Here is a 406-residue protein sequence, read N- to C-terminus: Olfactomedin-like protein 3 (406 aa).

A signal peptide spans 1-21 (MGPSTPLLILFLLSWSGPLQG). Residues 25–101 (HLVEYMERRL…REVDYLETQN (77 aa)) adopt a coiled-coil conformation. The Olfactomedin-like domain occupies 134–401 (DCGYTISQVR…QIVYKLEMRK (268 aa)). An intrachain disulfide couples Cys135 to Cys328. 2 N-linked (GlcNAc...) asparagine glycosylation sites follow: Asn177 and Asn248.

The protein belongs to the OLFML3 family. Abundant in placenta, moderate in liver and heart, whereas fairly weak in other tissues examined. On term placenta, mainly localized extracellularly surrounding the syncytiotrophoblastic cells and very rarely expressed in the maternal decidua layer.

It is found in the secreted. In terms of biological role, secreted scaffold protein that plays an essential role in dorsoventral patterning during early development. Stabilizes axial formation by restricting chordin (CHRD) activity on the dorsal side. Acts by facilitating the association between the tolloid proteases and their substrate chordin (CHRD), leading to enhance chordin (CHRD) degradation. May have matrix-related function involved in placental and embryonic development, or play a similar role in other physiological processes. The chain is Olfactomedin-like protein 3 (OLFML3) from Homo sapiens (Human).